We begin with the raw amino-acid sequence, 707 residues long: G protein-coupled receptor kinase 2 (707 aa).

Residues 1-190 (MADLEAVLAD…ELNMQLTMND (190 aa)) form an N-terminal region. The 122-residue stretch at 54–175 (KFDKIFNQKL…LESDKFTRFC (122 aa)) folds into the RGS domain. In terms of domain architecture, Protein kinase spans 191-455 (FSVHRIIGRG…PTEVKEHPFF (265 aa)). Residues 197–205 (IGRGGFGEV) and lysine 220 each bind ATP. The active-site Proton acceptor is the aspartate 318. Residues 456-523 (KDVDWQTVYL…VISERWQNEI (68 aa)) form the AGC-kinase C-terminal domain. One can recognise a PH domain in the interval 558-658 (DVIVHGYIKK…WHTSLRTAHK (101 aa)).

The protein belongs to the protein kinase superfamily. AGC Ser/Thr protein kinase family. GPRK subfamily. Interacts with amx-2; the interaction promotes phosphorylation of amx-2. In terms of tissue distribution, expressed in many neurons in the adult including the ASH neurons and other sensory neurons, many interneurons, and motor neurons of the ventral nerve cord. Expressed broadly in head neurons and is detected in several head acetylcholine neurons including the AVA, AVB, AVD and AVE premotor interneurons, the SMD and RMD head motor neurons, and the AIN, AIY, SIA, SIB and SAA interneurons. Expressed in HSN motor neurons and VC4/VC5 motor neurons. Also expressed in vulval muscle cells. Expressed in premotor and RIS interneurons. Expressed in ciliated neurons such as AWA, AWB, AWC, ASH and ADF olfactory and nociceptive neurons, and in chemosensory ASH neurons. Expressed in RMG neurons and AVK interneurons.

It carries out the reaction [G-protein-coupled receptor] + ATP = [G-protein-coupled receptor]-phosphate + ADP + H(+). Specifically phosphorylates the activated forms of G protein-coupled receptors. Required in adult sensory neurons for chemotaxis. Plays a role in the ASH sensory neurons in the chemotaxis response to NaCl where it is likely to modulate the strength of the NaCl avoidance response which occurs at high NaCl concentrations. Required in the HSN motor neurons for normal egg laying by promoting phosphorylation of amine oxidase amx-2 which inhibits amx-2 activity, preventing metabolism of serotonin. Acts in head acetylcholine neurons to positively regulate locomotion. Inactivates dopamine receptor dop-3 which leads to inactivation of guanine nucleotide-binding protein G(o) subunit goa-1 and activation of the unc-77/nca-1 and nca-2 ion channel proteins. Acts as a positive regulator of swimming by inactivating two dopamine receptors, dop-3 in the premotor interneurons that negatively controls early swimming through the nca ion channel, and dop-1 in the RIS neuron that inhibits late-stage swimming via the signaling of FMRFamide-like neuropeptide flp-11. Controls movement quiescence by negatively regulating multiple targets including egl-4 in ciliated neurons, the level of ligands of the neuropeptide receptor npr-1 in RMG neurons, and the secretion of flp-1 from AVK interneurons. The chain is G protein-coupled receptor kinase 2 (grk-2) from Caenorhabditis elegans.